The sequence spans 451 residues: Phosphoglucosamine mutase (451 aa).

S107 serves as the catalytic Phosphoserine intermediate. The Mg(2+) site is built by S107, D246, D248, and D250. S107 carries the post-translational modification Phosphoserine.

The protein belongs to the phosphohexose mutase family. Mg(2+) serves as cofactor. In terms of processing, activated by phosphorylation.

It carries out the reaction alpha-D-glucosamine 1-phosphate = D-glucosamine 6-phosphate. Its function is as follows. Catalyzes the conversion of glucosamine-6-phosphate to glucosamine-1-phosphate. The sequence is that of Phosphoglucosamine mutase from Burkholderia cenocepacia (strain ATCC BAA-245 / DSM 16553 / LMG 16656 / NCTC 13227 / J2315 / CF5610) (Burkholderia cepacia (strain J2315)).